A 376-amino-acid polypeptide reads, in one-letter code: Ribonucleoside-diphosphate reductase subunit beta (376 aa).

Asp85, Glu116, and His119 together coordinate Fe cation. Residue Tyr123 is part of the active site. The Fe cation site is built by Glu205, Glu239, and His242.

Belongs to the ribonucleoside diphosphate reductase small chain family. As to quaternary structure, tetramer of two alpha and two beta subunits. It depends on Fe cation as a cofactor.

It catalyses the reaction a 2'-deoxyribonucleoside 5'-diphosphate + [thioredoxin]-disulfide + H2O = a ribonucleoside 5'-diphosphate + [thioredoxin]-dithiol. Functionally, provides the precursors necessary for DNA synthesis. Catalyzes the biosynthesis of deoxyribonucleotides from the corresponding ribonucleotides. This is Ribonucleoside-diphosphate reductase subunit beta (nrdB) from Buchnera aphidicola subsp. Schizaphis graminum (strain Sg).